The sequence spans 529 residues: MSHNQNQPHRPVPVHVTNAEPNPNPNNLPNFLLSVRLKYVKLGYHYLISNALYILLLPLLAATIANLSSFTINDLSLLYNTLRFHFLSATLATALLISLSTAYFTTRPRRVFLLDFSCYKPDPSLICTRETFMDRSQRVGIFTEDNLAFQQKILERSGLGQKTYFPEALLRVPPNPCMEEARKEAETVMFGAIDAVLEKTGVKPKDIGILVVNCSLFNPTPSLSAMIVNKYKLRGNILSYNLGGMGCSAGLISIDLAKQMLQVQPNSYALVVSTENITLNWYLGNDRSMLLSNCIFRMGGAAVLLSNRSSDRSRSKYQLIHTVRTHKGADDNAFGCVYQREDNNAEETGKIGVSLSKNLMAIAGEALKTNITTLGPLVLPMSEQLLFFATLVARKVFKVKKIKPYIPDFKLAFEHFCIHAGGRAVLDEIEKNLDLSEWHMEPSRMTLNRFGNTSSSSLWYELAYSEAKGRIKRGDRTWQIAFGSGFKCNSAVWKALRTIDPMDEKTNPWIDEIDDFPVQVPRITPITSS.

A disordered region spans residues Met1–Asn22. Transmembrane regions (helical) follow at residues Leu52 to Ile72 and Phe84 to Phe104. Positions Tyr103 to Val396 constitute an FAE domain. Active-site residues include Cys247, His326, His415, His419, and Asn452.

It belongs to the thiolase-like superfamily. Chalcone/stilbene synthases family. In terms of tissue distribution, expressed in aerial organs. Expressed in leaves, flowers, siliques and stems. Expressed in roots, young seedlings, leaves, flowers and siliques.

The protein resides in the membrane. It carries out the reaction a very-long-chain acyl-CoA + malonyl-CoA + H(+) = a very-long-chain 3-oxoacyl-CoA + CO2 + CoA. It functions in the pathway lipid metabolism; fatty acid biosynthesis. With respect to regulation, inhibited by K3 herbicides such as alachlor, allidochlor, anilofos, cafenstrole, fentrazamide and flufenacet. Strongly inhibited by metazachlor and only slightly by mefluidide. Mediates the synthesis of VLCFAs from 22 to 26 carbons in length (e.g. C22, C24, C26). Functionally redundant with KCS2 in the two-carbon elongation of C22 fatty acids that is required for cuticular wax and root suberin biosynthesis. The sequence is that of 3-ketoacyl-CoA synthase 20 from Arabidopsis thaliana (Mouse-ear cress).